The following is a 333-amino-acid chain: UPF0324 membrane protein WS2204 (333 aa).

9 helical membrane passes run 4 to 26 (SIRP…FGLA), 31 to 53 (FLSL…APWY), 59 to 81 (IGII…LFGF), 88 to 110 (LLGV…FTLG), 125 to 147 (SMLI…ESLS), 154 to 176 (TAIA…PLVY), 218 to 240 (VIVK…FTIL), 253 to 275 (PWFA…PSWL), and 310 to 332 (ALAL…VKLL).

Belongs to the UPF0324 family.

Its subcellular location is the cell membrane. In Wolinella succinogenes (strain ATCC 29543 / DSM 1740 / CCUG 13145 / JCM 31913 / LMG 7466 / NCTC 11488 / FDC 602W) (Vibrio succinogenes), this protein is UPF0324 membrane protein WS2204.